Here is a 977-residue protein sequence, read N- to C-terminus: Disks large-associated protein 3 (977 aa).

Positions 1 to 10 (MRGYHGDRGS) are enriched in basic and acidic residues. Disordered regions lie at residues 1–24 (MRGY…QHMD), 52–96 (AGLG…MYPG), 137–167 (FHTL…ESPS), 181–289 (AKSH…CLDA), 398–417 (AMGD…SPKA), and 529–582 (PGSS…SADG). Low complexity predominate over residues 53–73 (GLGHLSPEGPLSLSEGPSSVG). Serine 58 is modified (phosphoserine). Residues 74-87 (PEGGPGGVGAGGGS) show a composition bias toward gly residues. Over residues 189-201 (PGKRDYNGPKADG) the composition is skewed to basic and acidic residues. Residues 221 to 245 (SHHHHHHHHHHHHQSRHGKRSKSKD) are compositionally biased toward basic residues. Residues 258 to 271 (GWWSSDDNLDSDSG) show a composition bias toward low complexity. Phosphoserine occurs at positions 404, 407, 410, and 414. The segment covering 538–547 (APPPIPPGSQ) has biased composition (pro residues). A phosphoserine mark is found at serine 641 and serine 643. Disordered stretches follow at residues 739–788 (EGYP…RTSP) and 906–939 (EEKK…RQRQ). Basic and acidic residues-rich tracts occupy residues 767 to 777 (GRRDSWMERGS) and 925 to 939 (PVKE…RQRQ). Residues serine 930, serine 933, and serine 965 each carry the phosphoserine modification.

The protein belongs to the SAPAP family. As to quaternary structure, interacts with DLG4/PSD-95. As to expression, highly expressed in central and peripherical nervous system (at protein level).

It is found in the cell membrane. The protein localises to the postsynaptic density. The protein resides in the synapse. Its function is as follows. May play a role in the molecular organization of synapses and neuronal cell signaling. Could be an adapter protein linking ion channel to the subsynaptic cytoskeleton. May induce enrichment of PSD-95/SAP90 at the plasma membrane. This is Disks large-associated protein 3 (Dlgap3) from Mus musculus (Mouse).